The primary structure comprises 401 residues: Steroid C26-monooxygenase (401 aa).

Cys343 is a heme binding site.

This sequence belongs to the cytochrome P450 family. The cofactor is heme.

It carries out the reaction cholest-4-en-3-one + 6 reduced [2Fe-2S]-[ferredoxin] + 3 O2 + 5 H(+) = (25R)-3-oxocholest-4-en-26-oate + 6 oxidized [2Fe-2S]-[ferredoxin] + 4 H2O. The protein operates within steroid metabolism; cholesterol degradation. Its function is as follows. Involved in the utilization of cholesterol as the sole carbon and energy source by degrading the side chain. Primarily catalyzes the sequential oxidation of the terminal methyl of cholest-4-en-3-one into (25R)-26-hydroxycholest-4-en-3-one (alcohol), (25R)-26-oxocholest-4-en-3-one (aldehyde), to finally yield the carboxylic acid (25R)-3-oxocholest-4-en-26-oate. Also able to sequentially oxidize cholesterol itself, not only cholest-4-en-3-one. This chain is Steroid C26-monooxygenase, found in Mycolicibacterium smegmatis (strain ATCC 700084 / mc(2)155) (Mycobacterium smegmatis).